We begin with the raw amino-acid sequence, 200 residues long: Small ribosomal subunit protein uS4 (200 aa).

The tract at residues 20–41 (TGTGKELDKRPYAPGQHGPNQR) is disordered. An S4 RNA-binding domain is found at 92-152 (SRLDNLVYRL…EKSKNLDVVK (61 aa)).

It belongs to the universal ribosomal protein uS4 family. As to quaternary structure, part of the 30S ribosomal subunit. Contacts protein S5. The interaction surface between S4 and S5 is involved in control of translational fidelity.

One of the primary rRNA binding proteins, it binds directly to 16S rRNA where it nucleates assembly of the body of the 30S subunit. Its function is as follows. With S5 and S12 plays an important role in translational accuracy. This chain is Small ribosomal subunit protein uS4, found in Oceanobacillus iheyensis (strain DSM 14371 / CIP 107618 / JCM 11309 / KCTC 3954 / HTE831).